We begin with the raw amino-acid sequence, 99 residues long: MAEVKPHHYDVIRRPLITEKSTLVAEQNKIIFEVAPDADKKAIKEAVEVLFKVSVTKVNTLTQKGKTKRFRGFEGRRSDVKKAIVTLAEGQSVDISTGL.

Belongs to the universal ribosomal protein uL23 family. Part of the 50S ribosomal subunit. Contacts protein L29, and trigger factor when it is bound to the ribosome.

Its function is as follows. One of the early assembly proteins it binds 23S rRNA. One of the proteins that surrounds the polypeptide exit tunnel on the outside of the ribosome. Forms the main docking site for trigger factor binding to the ribosome. This Hyphomonas neptunium (strain ATCC 15444) protein is Large ribosomal subunit protein uL23.